The sequence spans 108 residues: Protein YcgL (108 aa).

The 85-residue stretch at 12–96 folds into the YcgL domain; it reads MFCVIYRSSK…SPEDLLKQHL (85 aa).

In Shigella dysenteriae serotype 1 (strain Sd197), this protein is Protein YcgL.